Consider the following 368-residue polypeptide: 1-aminocyclopropane-1-carboxylate synthase (368 aa).

An N6-(pyridoxal phosphate)lysine modification is found at K230.

It belongs to the class-I pyridoxal-phosphate-dependent aminotransferase family. In terms of assembly, homodimer. The cofactor is pyridoxal 5'-phosphate.

The catalysed reaction is S-adenosyl-L-methionine = 1-aminocyclopropane-1-carboxylate + S-methyl-5'-thioadenosine + H(+). It functions in the pathway alkene biosynthesis; ethylene biosynthesis via S-adenosyl-L-methionine; ethylene from S-adenosyl-L-methionine: step 1/2. Catalyzes the formation of 1-aminocyclopropane-1-carboxylate, a direct precursor of ethylene in higher plants. The polypeptide is 1-aminocyclopropane-1-carboxylate synthase (ACS5) (Vigna radiata var. radiata (Mung bean)).